A 131-amino-acid chain; its full sequence is Ribonuclease VapC30 (131 aa).

The region spanning 1-129 (MVIDTSALVA…FQHTDIATVA (129 aa)) is the PINc domain. 2 residues coordinate Mg(2+): Asp-4 and Asp-99.

It belongs to the PINc/VapC protein family. The cofactor is Mg(2+).

In terms of biological role, toxic component of a type II toxin-antitoxin (TA) system. An RNase. Its toxic effect is neutralized by coexpression with cognate antitoxin VapB30. This is Ribonuclease VapC30 from Mycobacterium tuberculosis (strain CDC 1551 / Oshkosh).